Here is a 796-residue protein sequence, read N- to C-terminus: Exocyst complex component 3 (796 aa).

Residues 87–174 (PQLKEKLREL…GTNTEKEQML (88 aa)) adopt a coiled-coil conformation.

This sequence belongs to the SEC6 family. As to quaternary structure, the exocyst complex is composed of sec-3/exoc1, sec-5/exoc2, sec-6/exoc3, sec-8/exoc4, sec-10/exoc5, sec-15/exoc6, exo-70/exoc7 and exo-84/exoc8.

Its function is as follows. Component of the exocyst complex involved in the docking of exocytic vesicles with fusion sites on the plasma membrane. The chain is Exocyst complex component 3 (sec-6) from Caenorhabditis elegans.